The primary structure comprises 89 residues: UPF0367 protein MAE_19160 (89 aa).

It belongs to the UPF0367 family.

This chain is UPF0367 protein MAE_19160, found in Microcystis aeruginosa (strain NIES-843 / IAM M-2473).